A 347-amino-acid polypeptide reads, in one-letter code: Phosphoribosylformylglycinamidine cyclo-ligase (347 aa).

The protein belongs to the AIR synthase family.

Its subcellular location is the cytoplasm. The enzyme catalyses 2-formamido-N(1)-(5-O-phospho-beta-D-ribosyl)acetamidine + ATP = 5-amino-1-(5-phospho-beta-D-ribosyl)imidazole + ADP + phosphate + H(+). Its pathway is purine metabolism; IMP biosynthesis via de novo pathway; 5-amino-1-(5-phospho-D-ribosyl)imidazole from N(2)-formyl-N(1)-(5-phospho-D-ribosyl)glycinamide: step 2/2. This is Phosphoribosylformylglycinamidine cyclo-ligase from Prochlorococcus marinus (strain MIT 9312).